The sequence spans 231 residues: Large ribosomal subunit protein uL3 (231 aa).

An N5-methylglutamine modification is found at Q151.

It belongs to the universal ribosomal protein uL3 family. In terms of assembly, part of the 50S ribosomal subunit. Forms a cluster with proteins L14 and L19. Methylated by PrmB.

Functionally, one of the primary rRNA binding proteins, it binds directly near the 3'-end of the 23S rRNA, where it nucleates assembly of the 50S subunit. This is Large ribosomal subunit protein uL3 from Granulibacter bethesdensis (strain ATCC BAA-1260 / CGDNIH1).